Here is a 478-residue protein sequence, read N- to C-terminus: Ribosomal RNA small subunit methyltransferase F (478 aa).

S-adenosyl-L-methionine is bound by residues 126–132 (AAAPGSK), Glu150, Asp177, and Asp195. The active-site Nucleophile is the Cys248.

Belongs to the class I-like SAM-binding methyltransferase superfamily. RsmB/NOP family.

Its subcellular location is the cytoplasm. The enzyme catalyses cytidine(1407) in 16S rRNA + S-adenosyl-L-methionine = 5-methylcytidine(1407) in 16S rRNA + S-adenosyl-L-homocysteine + H(+). In terms of biological role, specifically methylates the cytosine at position 1407 (m5C1407) of 16S rRNA. This is Ribosomal RNA small subunit methyltransferase F from Erwinia tasmaniensis (strain DSM 17950 / CFBP 7177 / CIP 109463 / NCPPB 4357 / Et1/99).